Here is a 169-residue protein sequence, read N- to C-terminus: Sorting nexin-24 (169 aa).

Position 1 is an N-acetylmethionine (M1). One can recognise a PX domain in the interval 1–125; it reads MEVYIPSFRY…SFDETESEES (125 aa). R38, S40, K61, and R74 together coordinate a 1,2-diacyl-sn-glycero-3-phospho-(1D-myo-inositol-3-phosphate). Phosphoserine is present on residues S113 and S116.

It belongs to the sorting nexin family.

It is found in the cytoplasmic vesicle membrane. May be involved in several stages of intracellular trafficking. This Homo sapiens (Human) protein is Sorting nexin-24 (SNX24).